The primary structure comprises 373 residues: Chaperone protein DnaJ (373 aa).

Positions 5–70 (CYYEVLEVSR…EKRSRYDRFG (66 aa)) constitute a J domain. A CR-type zinc finger spans residues 134–212 (GTEVELNIPV…CRGAGYVRKQ (79 aa)). Positions 147, 150, 164, 167, 186, 189, 200, and 203 each coordinate Zn(2+). CXXCXGXG motif repeat units lie at residues 147–154 (CDTCEGSG), 164–171 (CSHCGGRG), 186–193 (CPACNGRG), and 200–207 (CSECRGAG).

The protein belongs to the DnaJ family. Homodimer. Zn(2+) is required as a cofactor.

The protein localises to the cytoplasm. In terms of biological role, participates actively in the response to hyperosmotic and heat shock by preventing the aggregation of stress-denatured proteins and by disaggregating proteins, also in an autonomous, DnaK-independent fashion. Unfolded proteins bind initially to DnaJ; upon interaction with the DnaJ-bound protein, DnaK hydrolyzes its bound ATP, resulting in the formation of a stable complex. GrpE releases ADP from DnaK; ATP binding to DnaK triggers the release of the substrate protein, thus completing the reaction cycle. Several rounds of ATP-dependent interactions between DnaJ, DnaK and GrpE are required for fully efficient folding. Also involved, together with DnaK and GrpE, in the DNA replication of plasmids through activation of initiation proteins. This is Chaperone protein DnaJ from Maridesulfovibrio salexigens (strain ATCC 14822 / DSM 2638 / NCIMB 8403 / VKM B-1763) (Desulfovibrio salexigens).